The following is a 100-amino-acid chain: Suppressor of silencing 2b (100 aa).

The Nuclear localization signal signature appears at 22–27 (KRRRRR).

This sequence belongs to the cucumovirus/ilarvirus protein 2b family. Homotetramer. Interacts with host AGO1; this interaction blocks AGO1 cleavage activity to attenuate RNA silencing and thus counter host defense. Interacts with host JAZ.

The protein localises to the host nucleus. In terms of biological role, multifunctional protein that plays two independent roles: viral suppressor of host RNAi (VSR) and viral inducer of host attractiveness to insect vectors (VIA). Acts as a suppressor of RNA-mediated gene silencing, also known as post-transcriptional gene silencing (PTGS), a mechanism of plant viral defense that limits the accumulation of viral RNAs. May directly interfere with mobile silencing signaling. Also inhibits signal transduction by the phytohormone jasmonate, making the infected plant more attractive to aphids, which are the second host to play a role as a dissemination vector. Acts by binding to and inhibiting JAZ degradation in the host. The protein is Suppressor of silencing 2b of Cucumis sativus (Cucumber).